The sequence spans 477 residues: Bifunctional protein HldE (477 aa).

The segment at 1-319 (MTPPLPGFRD…AALGGGPAPA (319 aa)) is ribokinase. Position 195 to 198 (195 to 198 (NLAE)) interacts with ATP. Residue aspartate 264 is part of the active site. A cytidylyltransferase region spans residues 346 to 477 (MTNGCFDLLH…DLIARIRSRG (132 aa)).

In the N-terminal section; belongs to the carbohydrate kinase PfkB family. The protein in the C-terminal section; belongs to the cytidylyltransferase family. In terms of assembly, homodimer.

The enzyme catalyses D-glycero-beta-D-manno-heptose 7-phosphate + ATP = D-glycero-beta-D-manno-heptose 1,7-bisphosphate + ADP + H(+). It catalyses the reaction D-glycero-beta-D-manno-heptose 1-phosphate + ATP + H(+) = ADP-D-glycero-beta-D-manno-heptose + diphosphate. It participates in nucleotide-sugar biosynthesis; ADP-L-glycero-beta-D-manno-heptose biosynthesis; ADP-L-glycero-beta-D-manno-heptose from D-glycero-beta-D-manno-heptose 7-phosphate: step 1/4. The protein operates within nucleotide-sugar biosynthesis; ADP-L-glycero-beta-D-manno-heptose biosynthesis; ADP-L-glycero-beta-D-manno-heptose from D-glycero-beta-D-manno-heptose 7-phosphate: step 3/4. Functionally, catalyzes the phosphorylation of D-glycero-D-manno-heptose 7-phosphate at the C-1 position to selectively form D-glycero-beta-D-manno-heptose-1,7-bisphosphate. Its function is as follows. Catalyzes the ADP transfer from ATP to D-glycero-beta-D-manno-heptose 1-phosphate, yielding ADP-D-glycero-beta-D-manno-heptose. The protein is Bifunctional protein HldE of Halorhodospira halophila (strain DSM 244 / SL1) (Ectothiorhodospira halophila (strain DSM 244 / SL1)).